Reading from the N-terminus, the 431-residue chain is Pheromone alpha factor receptor (431 aa).

The Extracellular segment spans residues 1–49 (MSDAAPSLSNLFYDPTYNPGQSTINYTSIYGNGSTITFDELQGLVNSTV). N25 and N32 each carry an N-linked (GlcNAc...) asparagine glycan. A helical transmembrane segment spans residues 50 to 72 (TQAIMFGVRCGAAALTLIVMWMT). Positions 53 to 61 (IMFGVRCGA) match the Glycine zipper motif motif. At 73 to 78 (SRSRKT) the chain is on the cytoplasmic side. A helical membrane pass occupies residues 79–102 (PIFIINQVSLFLIILHSALYFKYL). The Extracellular segment spans residues 103-132 (LSNYSSVTYALTGFPQFISRGDVHVYGATN). The chain crosses the membrane as a helical span at residues 133-156 (IIQVLLVASIETSLVFQIKVIFTG). At 157–163 (DNFKRIG) the chain is on the cytoplasmic side. The chain crosses the membrane as a helical span at residues 164–188 (LMLTSISFTLGIATVTMYFVSAVKG). Residues 189–205 (MIVTYNDVSATQDKYFN) lie on the Extracellular side of the membrane. A helical transmembrane segment spans residues 206–230 (ASTILLASSINFMSFVLVVKLILAI). Topologically, residues 231–241 (RSRRFLGLKQF) are cytoplasmic. A helical transmembrane segment spans residues 242–266 (DSFHILLIMSCQSLLVPSIIFILAY). Over 267–275 (SLKPNQGTD) the chain is Extracellular. Residues 276 to 299 (VLTTVATLLAVLSLPLSSMWATAA) form a helical membrane-spanning segment. Topologically, residues 300-431 (NNASKTNTIT…KFWTEDNNNL (132 aa)) are cytoplasmic. A phosphoserine mark is found at S310 and S315. Phosphothreonine is present on T329. S331 is modified (phosphoserine). K337 is covalently cross-linked (Glycyl lysine isopeptide (Lys-Gly) (interchain with G-Cter in ubiquitin)). At S360 the chain carries Phosphoserine. Position 363 is a phosphothreonine (T363). Phosphoserine is present on S366. K374 participates in a covalent cross-link: Glycyl lysine isopeptide (Lys-Gly) (interchain with G-Cter in ubiquitin). Positions 379–389 (QLPTPTSSKNT) are enriched in polar residues. The interval 379-406 (QLPTPTSSKNTRIGPFADASYKEGEVEP) is disordered. The residue at position 382 (T382) is a Phosphothreonine. Phosphoserine occurs at positions 385 and 386. Residue K400 forms a Glycyl lysine isopeptide (Lys-Gly) (interchain with G-Cter in ubiquitin) linkage. Phosphothreonine occurs at positions 411 and 414. K422 is covalently cross-linked (Glycyl lysine isopeptide (Lys-Gly) (interchain with G-Cter in ubiquitin)).

It belongs to the G-protein coupled receptor 4 family. As to quaternary structure, homodimer. Might also for higher order homooligomers such as homotetramers. Oligomerization is mediated significantly by transmembrane domain 1 (TMD1), possibly in concert with the N-terminal extracellular domain and TMD2. Interaction with GPA1, its dedicated G-alpha protein. Post-translationally, undergoes hyperphosphorylation of the C-terminal cytoplasmic domain after binding of the alpha-factor, which leads to internalization by endocytosis. In terms of processing, monoubiquitination at Lys-337 triggers internalization of STE2. N-glycosylated. N-glycosylation may be involved in the sorting process for misfolded STE2 protein. In terms of tissue distribution, expressed in MATa strains but not in MATalpha strains.

Its subcellular location is the cell membrane. Its function is as follows. Fungal class D1 G-protein-coupled receptor that acts as an alpha-factor pheromone receptor performing pheromone-dependent signal transduction involved in cellular conjugation, mating projection assembly, and in cell fusion. Following alpha-factor-binding, the signal is transmitted via a tripartite G protein consisting of alpha-, beta- and gamma-subunits (GAP1, STE4 and STE8 respectively) that prepares the cell for conjugation. In the inactive state, the cytoplasmic end of transmembrane domain 7 (TMD7) is unstructured and packs between TMD1-6, blocking the G protein coupling site. Agonist binding results in the outward movement of the extracellular ends of TMD6 and TMD7 by 6 Angstroms. On the intracellular surface, the G protein coupling site is formed by a 20 Angstroms outward movement of the unstructured region in TMD7 that unblocks the site, and a 12 Angstroms inward movement of TMD6. The sequence is that of Pheromone alpha factor receptor (STE2) from Saccharomyces cerevisiae (strain ATCC 204508 / S288c) (Baker's yeast).